The primary structure comprises 353 residues: 3-isopropylmalate dehydrogenase (353 aa).

4 residues coordinate substrate: arginine 97, arginine 107, arginine 135, and aspartate 219. Residues aspartate 219, aspartate 243, and aspartate 247 each contribute to the Mg(2+) site.

This sequence belongs to the isocitrate and isopropylmalate dehydrogenases family. LeuB type 1 subfamily. As to quaternary structure, homodimer. Mg(2+) serves as cofactor. Requires Mn(2+) as cofactor.

It is found in the cytoplasm. It carries out the reaction (2R,3S)-3-isopropylmalate + NAD(+) = 4-methyl-2-oxopentanoate + CO2 + NADH. Its pathway is amino-acid biosynthesis; L-leucine biosynthesis; L-leucine from 3-methyl-2-oxobutanoate: step 3/4. Catalyzes the oxidation of 3-carboxy-2-hydroxy-4-methylpentanoate (3-isopropylmalate) to 3-carboxy-4-methyl-2-oxopentanoate. The product decarboxylates to 4-methyl-2 oxopentanoate. This chain is 3-isopropylmalate dehydrogenase, found in Bacteroides fragilis (strain ATCC 25285 / DSM 2151 / CCUG 4856 / JCM 11019 / LMG 10263 / NCTC 9343 / Onslow / VPI 2553 / EN-2).